The chain runs to 2136 residues: U5 small nuclear ribonucleoprotein 200 kDa helicase (2136 aa).

2 positions are modified to phosphoserine: S17 and S26. A disordered region spans residues 39-81; sequence EVLSLVGKLEGTRMGDKAQRTKPQMQEERRAKRRKRDEDRHDM. K46 is covalently cross-linked (Glycyl lysine isopeptide (Lys-Gly) (interchain with G-Cter in SUMO2)). Residues 48–81 show a composition bias toward basic and acidic residues; sequence EGTRMGDKAQRTKPQMQEERRAKRRKRDEDRHDM. Residues 54 to 84 are a coiled coil; sequence DKAQRTKPQMQEERRAKRRKRDEDRHDMNKM. Position 225 is a phosphoserine (S225). Phosphothreonine is present on T389. The interaction with C9orf78 and WBP4 stretch occupies residues 395–2129; the sequence is DLDQGGEALA…YKFSVDVKEA (1735 aa). The Helicase ATP-binding 1 domain maps to 490-673; that stretch reads RAALETDENL…FLRVDPAKGL (184 aa). ATP is bound at residue 503–510; sequence APTGAGKT. The DEAH box motif lies at 615–618; it reads DEIH. The region spanning 684 to 921 is the Helicase C-terminal 1 domain; the sequence is PLEQTYVGIT…NAKDAVNWLG (238 aa). Y709 carries the post-translational modification Phosphotyrosine. K944 participates in a covalent cross-link: Glycyl lysine isopeptide (Lys-Gly) (interchain with G-Cter in SUMO). Position 971 is an N6-acetyllysine; alternate (K971). Residue K971 forms a Glycyl lysine isopeptide (Lys-Gly) (interchain with G-Cter in SUMO); alternate linkage. One can recognise an SEC63 1 domain in the interval 982 to 1286; it reads TELGRIASHY…SCETQLPVSF (305 aa). Glycyl lysine isopeptide (Lys-Gly) (interchain with G-Cter in SUMO) cross-links involve residues K1071 and K1199. Residues 1282–2136 form an interaction with TSSC4 region; sequence LPVSFRHLIL…KEAETDSDSD (855 aa). A Helicase ATP-binding 2 domain is found at 1337-1512; the sequence is NTVYNSDDNV…WLGCSATSTF (176 aa). 1350–1357 provides a ligand contact to ATP; the sequence is APTGSGKT. Phosphothreonine is present on T1428. Residues 1454 to 1457 carry the DEAH box motif; it reads DEVH. Positions 1545–1753 constitute a Helicase C-terminal 2 domain; the sequence is PVYHAITKHS…TIENKQDAVD (209 aa). A Phosphothreonine modification is found at T1765. The region spanning 1812 to 2124 is the SEC63 2 domain; that stretch reads PLNLGMIAAY…GCDQEYKFSV (313 aa). S2002 is modified (phosphoserine). K2091 is covalently cross-linked (Glycyl lysine isopeptide (Lys-Gly) (interchain with G-Cter in SUMO)). Position 2131 is a phosphothreonine (T2131). Residues S2133 and S2135 each carry the phosphoserine modification.

This sequence belongs to the helicase family. SKI2 subfamily. In terms of assembly, component of a core complex containing at least PRPF8, SNRNP200, EFTUD2 and SNRNP40. Component of the U5 snRNP and U4/U6-U5 tri-snRNP complexes, building blocks of the spliceosome. Component of the U4/U6-U5 tri-snRNP complex composed of the U4, U6 and U5 snRNAs and at least PRPF3, PRPF4, PRPF6, PRPF8, PRPF31, SNRNP200, TXNL4A, SNRNP40, DDX23, CD2BP2, PPIH, SNU13, EFTUD2, SART1 and USP39. Component of precatalytic, catalytic and postcatalytic spliceosomal complexes. Component of the minor spliceosome, which splices U12-type introns. Interacts with C9orf78; the interaction is direct and mutually exclusive with its interaction with WBP4. Interacts with WBP4; the interaction is mutually exclusive with its interaction with C9orf78. Interacts with PRPF8. Interacts with TSSC4; the interaction is direct, excludes recruitment of C9ORF78 and WBP4 to SNRNP200 and negatively regulates its RNA helicase activity.

It is found in the nucleus. The enzyme catalyses ATP + H2O = ADP + phosphate + H(+). Functionally, catalyzes the ATP-dependent unwinding of U4/U6 RNA duplices, an essential step in the assembly of a catalytically active spliceosome. Plays a role in pre-mRNA splicing as core component of precatalytic, catalytic and postcatalytic spliceosomal complexes. As a component of the minor spliceosome, involved in the splicing of U12-type introns in pre-mRNAs. Involved in spliceosome assembly, activation and disassembly. Mediates changes in the dynamic network of RNA-RNA interactions in the spliceosome. The protein is U5 small nuclear ribonucleoprotein 200 kDa helicase (Snrnp200) of Mus musculus (Mouse).